The following is a 290-amino-acid chain: Probable porphobilinogen deaminase (290 aa).

An S-(dipyrrolylmethanemethyl)cysteine modification is found at cysteine 230.

It belongs to the HMBS family. Dipyrromethane is required as a cofactor.

It catalyses the reaction 4 porphobilinogen + H2O = hydroxymethylbilane + 4 NH4(+). Its pathway is porphyrin-containing compound metabolism; protoporphyrin-IX biosynthesis; coproporphyrinogen-III from 5-aminolevulinate: step 2/4. Tetrapolymerization of the monopyrrole PBG into the hydroxymethylbilane pre-uroporphyrinogen in several discrete steps. In Metallosphaera sedula (strain ATCC 51363 / DSM 5348 / JCM 9185 / NBRC 15509 / TH2), this protein is Probable porphobilinogen deaminase.